The following is an 81-amino-acid chain: UPF0386 protein Smed_0945 (81 aa).

Belongs to the UPF0386 family.

The sequence is that of UPF0386 protein Smed_0945 from Sinorhizobium medicae (strain WSM419) (Ensifer medicae).